A 399-amino-acid polypeptide reads, in one-letter code: Putative glutamate--cysteine ligase 2 (399 aa).

Residues 377-399 are disordered; that stretch reads PAVGSSHGRTDPSRNGGPSHAGA.

It belongs to the glutamate--cysteine ligase type 2 family. YbdK subfamily.

It catalyses the reaction L-cysteine + L-glutamate + ATP = gamma-L-glutamyl-L-cysteine + ADP + phosphate + H(+). Its function is as follows. ATP-dependent carboxylate-amine ligase which exhibits weak glutamate--cysteine ligase activity. The chain is Putative glutamate--cysteine ligase 2 from Thermobifida fusca (strain YX).